A 109-amino-acid chain; its full sequence is Aquaporin-2 (109 aa).

Over 1-6 the chain is Cytoplasmic; that stretch reads SIAFSR. A helical membrane pass occupies residues 7 to 27; the sequence is AVFSEFLATLLFVFFGLGSAL. The Extracellular portion of the chain corresponds to 28–35; sequence NWPQALPS. A helical transmembrane segment spans residues 36–54; sequence VLQIAMAFGLAIGTLVQTL. Topologically, residues 55–59 are cytoplasmic; the sequence is GHISG. The discontinuously helical intramembrane region spans 60–69; it reads AHINPAVTVA. An NPA 1 motif is present at residues 63–65; sequence NPA. Residues 70–80 lie on the Cytoplasmic side of the membrane; the sequence is CLVGCHVSFLR. The chain crosses the membrane as a helical span at residues 81–102; that stretch reads ATFYLAAQLLGAVAGAALLHEL. At 103–109 the chain is on the extracellular side; it reads TPPDIRG.

This sequence belongs to the MIP/aquaporin (TC 1.A.8) family. Homotetramer. In terms of processing, serine phosphorylation is necessary and sufficient for expression at the apical membrane. Endocytosis is not phosphorylation-dependent. N-glycosylated.

The protein resides in the apical cell membrane. It localises to the basolateral cell membrane. The protein localises to the cell membrane. Its subcellular location is the cytoplasmic vesicle membrane. It is found in the golgi apparatus. The protein resides in the trans-Golgi network membrane. It catalyses the reaction H2O(in) = H2O(out). The catalysed reaction is glycerol(in) = glycerol(out). Its function is as follows. Forms a water-specific channel that provides the plasma membranes of renal collecting duct with high permeability to water, thereby permitting water to move in the direction of an osmotic gradient. Plays an essential role in renal water homeostasis. Could also be permeable to glycerol. The polypeptide is Aquaporin-2 (Elephas maximus (Indian elephant)).